A 368-amino-acid chain; its full sequence is Quinolinate synthase (368 aa).

Iminosuccinate contacts are provided by H46 and S63. C110 contributes to the [4Fe-4S] cluster binding site. Residues 141-143 and S162 each bind iminosuccinate; that span reads YVN. C230 lines the [4Fe-4S] cluster pocket. Iminosuccinate is bound by residues 256–258 and T273; that span reads HPE. Residue C320 participates in [4Fe-4S] cluster binding.

The protein belongs to the quinolinate synthase family. Type 3 subfamily. The cofactor is [4Fe-4S] cluster.

Its subcellular location is the cytoplasm. It carries out the reaction iminosuccinate + dihydroxyacetone phosphate = quinolinate + phosphate + 2 H2O + H(+). Its pathway is cofactor biosynthesis; NAD(+) biosynthesis; quinolinate from iminoaspartate: step 1/1. Functionally, catalyzes the condensation of iminoaspartate with dihydroxyacetone phosphate to form quinolinate. In Bacillus cereus (strain Q1), this protein is Quinolinate synthase.